Reading from the N-terminus, the 506-residue chain is Kynurenine 3-monooxygenase (506 aa).

The protein belongs to the aromatic-ring hydroxylase family. KMO subfamily. It depends on FAD as a cofactor.

The protein localises to the mitochondrion outer membrane. It carries out the reaction L-kynurenine + NADPH + O2 + H(+) = 3-hydroxy-L-kynurenine + NADP(+) + H2O. The protein operates within cofactor biosynthesis; NAD(+) biosynthesis; quinolinate from L-kynurenine: step 1/3. Its function is as follows. Catalyzes the hydroxylation of L-kynurenine (L-Kyn) to form 3-hydroxy-L-kynurenine (L-3OHKyn). Required for synthesis of quinolinic acid. This chain is Kynurenine 3-monooxygenase (bna4), found in Emericella nidulans (strain FGSC A4 / ATCC 38163 / CBS 112.46 / NRRL 194 / M139) (Aspergillus nidulans).